A 119-amino-acid chain; its full sequence is Large ribosomal subunit protein uL18 (119 aa).

A disordered region spans residues 54-76 (LTSASTLADDVEGETPTEESRSV).

This sequence belongs to the universal ribosomal protein uL18 family. As to quaternary structure, part of the 50S ribosomal subunit; part of the 5S rRNA/L5/L18/L25 subcomplex. Contacts the 5S and 23S rRNAs.

In terms of biological role, this is one of the proteins that bind and probably mediate the attachment of the 5S RNA into the large ribosomal subunit, where it forms part of the central protuberance. The sequence is that of Large ribosomal subunit protein uL18 from Salinibacter ruber (strain DSM 13855 / M31).